Reading from the N-terminus, the 627-residue chain is Altered inheritance of mitochondria protein 9, mitochondrial (627 aa).

The N-terminal 43 residues, 1-43 (MIRYTVAGHSRRCVVGASKRVGAIKCITVAATKRFISNKPNEV), are a transit peptide targeting the mitochondrion.

The protein belongs to the AIM9 family.

It is found in the mitochondrion. The protein is Altered inheritance of mitochondria protein 9, mitochondrial (AIM9) of Saccharomyces cerevisiae (strain YJM789) (Baker's yeast).